The primary structure comprises 480 residues: Gasdermin-C3 (480 aa).

The interval methionine 1–lysine 226 is triggers pyroptosis.

Belongs to the gasdermin family. Homooligomer; homooligomeric ring-shaped pore complex containing 27-28 subunits when inserted in the membrane. Cleavage by CASP8 relieves autoinhibition by releasing the N-terminal moiety (Gasdermin-C3, N-terminal) that initiates pyroptosis. Post-translationally, palmitoylated.

It localises to the cytoplasm. The protein localises to the cytosol. Its subcellular location is the cell membrane. With respect to regulation, the full-length protein before cleavage is inactive: intramolecular interactions between N- and C-terminal domains mediate autoinhibition in the absence of activation signal. The intrinsic pyroptosis-inducing activity is carried by the released N-terminal moiety (Gasdermin-C3, N-terminal) following cleavage by caspase CASP8. In terms of biological role, this form constitutes the precursor of the pore-forming protein: upon cleavage, the released N-terminal moiety (Gasdermin-C3, N-terminal) binds to membranes and forms pores, triggering pyroptosis. Functionally, pore-forming protein that causes membrane permeabilization and pyroptosis. Produced by the cleavage of gasdermin-C3 by caspase CASP8 in response to death signals. After cleavage, moves to the plasma membrane where it strongly binds to membrane inner leaflet lipids. Homooligomerizes within the membrane and forms pores of 10-15 nanometers (nm) of inner diameter, triggering pyroptosis. The chain is Gasdermin-C3 from Mus musculus (Mouse).